The primary structure comprises 679 residues: DNA ligase (679 aa).

Residues 36–40 (DAQYD), 85–86 (SL), and glutamate 116 each bind NAD(+). Lysine 118 functions as the N6-AMP-lysine intermediate in the catalytic mechanism. Positions 139, 174, 300, and 324 each coordinate NAD(+). The Zn(2+) site is built by cysteine 418, cysteine 421, cysteine 436, and cysteine 441. The 80-residue stretch at 600 to 679 (EGGGPLNGKV…NEFRELTGRK (80 aa)) folds into the BRCT domain.

The protein belongs to the NAD-dependent DNA ligase family. LigA subfamily. The cofactor is Mg(2+). Mn(2+) serves as cofactor.

It carries out the reaction NAD(+) + (deoxyribonucleotide)n-3'-hydroxyl + 5'-phospho-(deoxyribonucleotide)m = (deoxyribonucleotide)n+m + AMP + beta-nicotinamide D-nucleotide.. Functionally, DNA ligase that catalyzes the formation of phosphodiester linkages between 5'-phosphoryl and 3'-hydroxyl groups in double-stranded DNA using NAD as a coenzyme and as the energy source for the reaction. It is essential for DNA replication and repair of damaged DNA. This is DNA ligase from Pelotomaculum thermopropionicum (strain DSM 13744 / JCM 10971 / SI).